Here is a 689-residue protein sequence, read N- to C-terminus: Pentatricopeptide repeat-containing protein At1g71460, chloroplastic (689 aa).

A chloroplast-targeting transit peptide spans 1–49 (MEVVSSLGIRDLPASLSVTTSLNHRPHRSDKDGAPAKSPIRPSRTRRPS). Positions 16-68 (LSVTTSLNHRPHRSDKDGAPAKSPIRPSRTRRPSTSPAKKPKPFRERDAFPSS) are disordered. Residues 38-52 (SPIRPSRTRRPSTSP) are compositionally biased toward low complexity. PPR repeat units lie at residues 75-109 (NPYI…GIPV), 110-144 (NATT…GLES), 145-175 (NEFL…STSS), 176-212 (NVYS…GVDL), 213-247 (NVYS…GLFN), 248-282 (SVFL…DIVV), 283-309 (WGAM…MISE), 315-350 (NSVI…NYVE), 351-381 (QPFV…SKQR), 382-416 (NAIS…GFRP), 417-451 (DVVT…LFLP), 452-482 (NVSL…LEQR), 483-517 (NVKA…KHRP), 518-552 (DSVT…EFES), 553-583 (IPFV…VAVK), 584-618 (GSLT…GFTP), 619-649 (NTFT…MLRM), and 655-689 (SEEH…SLQT).

The protein belongs to the PPR family. PCMP-A subfamily.

The protein localises to the plastid. It localises to the chloroplast. The protein is Pentatricopeptide repeat-containing protein At1g71460, chloroplastic (PCMP-A3) of Arabidopsis thaliana (Mouse-ear cress).